The chain runs to 242 residues: Glutamate transport ATP-binding protein GluA (242 aa).

The 235-residue stretch at 2–236 folds into the ABC transporter domain; the sequence is IKMTGVQKYF…PKSDRAKDFL (235 aa). 34–41 provides a ligand contact to ATP; sequence GPSGSGKS.

The protein belongs to the ABC transporter superfamily. As to quaternary structure, the complex is composed of two ATP-binding proteins (GluA), two transmembrane proteins (GluC and GluD) and a solute-binding protein (GluB).

The protein localises to the cell membrane. It catalyses the reaction a polar amino acid(out) + ATP + H2O = a polar amino acid(in) + ADP + phosphate + H(+). It carries out the reaction L-glutamate(out) + ATP + H2O = L-glutamate(in) + ADP + phosphate + H(+). Part of the ABC transporter complex GluABCD involved in glutamate uptake. Probably responsible for energy coupling to the transport system. The chain is Glutamate transport ATP-binding protein GluA from Corynebacterium glutamicum (strain ATCC 13032 / DSM 20300 / JCM 1318 / BCRC 11384 / CCUG 27702 / LMG 3730 / NBRC 12168 / NCIMB 10025 / NRRL B-2784 / 534).